The following is an 867-amino-acid chain: Ataxin-7 (867 aa).

Residues 1–15 show a composition bias toward basic and acidic residues; that stretch reads MSERAADDVRGEPRR. The tract at residues 1-59 is disordered; it reads MSERAADDVRGEPRRAAGGAAAARQQQQQPQPLQPQRQHPPLRRPRAEDGGTGDTTTSA. Positions 16 to 39 are enriched in low complexity; the sequence is AAGGAAAARQQQQQPQPLQPQRQH. The residue at position 222 (K222) is an N6-acetyllysine. A Glycyl lysine isopeptide (Lys-Gly) (interchain with G-Cter in SUMO); alternate cross-link involves residue K243. K243 participates in a covalent cross-link: Glycyl lysine isopeptide (Lys-Gly) (interchain with G-Cter in SUMO2); alternate. The 68-residue stretch at 320-387 folds into the SCA7 domain; sequence KRLSEREFDP…KAREKELIRH (68 aa). Positions 379–400 are enriched in basic and acidic residues; the sequence is AREKELIRHDSQQVPHPLRDPH. 3 disordered regions span residues 379–483, 600–711, and 845–867; these read AREK…EESV, HGTT…SHSV, and TGNI…KARP. Pro residues-rich tracts occupy residues 426–437 and 447–462; these read PQTPSLPRPPGC and IDPP…PLPA. Residues 472 to 481 show a composition bias toward acidic residues; that stretch reads EEGEGDDREE. Residues 619–647 are compositionally biased toward low complexity; that stretch reads SVQSRQVSASSSPPSTPSGLSSVPSSPLS. Over residues 649 to 659 the composition is skewed to basic residues; that stretch reads KPQKWKPSKSI. The segment covering 665 to 674 has biased composition (polar residues); that stretch reads SALSTNCHNA. The segment covering 689 to 711 has biased composition (low complexity); that stretch reads SSPLLVPSSSSSSSSSSSSSHSV. A compositionally biased stretch (polar residues) spans 846-860; sequence GNISGAQGLTNNSLL.

The protein belongs to the ataxin-7 family. As to quaternary structure, component of the SAGA transcription coactivator-HAT complex, at least composed of SUPT3H, GCN5L2, TAF5L, TAF6L, SUPT7L, TADA3L, TAD1L, TAF10, TAF12, TRRAP, TAF9 and ATXN7. The STAGA core complex is associated with a subcomplex required for histone deubiquitination composed of ATXN7L3, ENY2 and USP22. Interacts with SORBS1, PSMC1 and CRX. Interacts with TRRAP, GCN5L2 and TAF10. Interacts with alpha tubulin. Proteolytically cleaved by caspase-7 (CASP7). Post-translationally, sumoylation has no effect on subcellular location or interaction with components of the STAGA complex. Widely expressed in adult tissues, with the highest expression in heart, brain, liver and kidney.

The protein resides in the nucleus. The protein localises to the nucleolus. It localises to the nucleus matrix. It is found in the cytoplasm. Its subcellular location is the cytoskeleton. In terms of biological role, acts as a component of the SAGA (aka STAGA) transcription coactivator-HAT complex. Mediates the interaction of SAGA complex with the CRX and is involved in CRX-dependent gene activation. Probably involved in tethering the deubiquitination module within the SAGA complex. Necessary for microtubule cytoskeleton stabilization. Involved in neurodegeneration. The chain is Ataxin-7 (Atxn7) from Mus musculus (Mouse).